Here is a 634-residue protein sequence, read N- to C-terminus: 1-deoxy-D-xylulose-5-phosphate synthase (634 aa).

Residues histidine 74 and 115 to 117 each bind thiamine diphosphate; that span reads AHS. Residue aspartate 146 participates in Mg(2+) binding. Residues 147-148, asparagine 176, tyrosine 283, and glutamate 365 contribute to the thiamine diphosphate site; that span reads GA. Mg(2+) is bound at residue asparagine 176.

It belongs to the transketolase family. DXPS subfamily. In terms of assembly, homodimer. The cofactor is Mg(2+). Thiamine diphosphate is required as a cofactor.

The catalysed reaction is D-glyceraldehyde 3-phosphate + pyruvate + H(+) = 1-deoxy-D-xylulose 5-phosphate + CO2. The protein operates within metabolic intermediate biosynthesis; 1-deoxy-D-xylulose 5-phosphate biosynthesis; 1-deoxy-D-xylulose 5-phosphate from D-glyceraldehyde 3-phosphate and pyruvate: step 1/1. Functionally, catalyzes the acyloin condensation reaction between C atoms 2 and 3 of pyruvate and glyceraldehyde 3-phosphate to yield 1-deoxy-D-xylulose-5-phosphate (DXP). This is 1-deoxy-D-xylulose-5-phosphate synthase from Burkholderia cenocepacia (strain ATCC BAA-245 / DSM 16553 / LMG 16656 / NCTC 13227 / J2315 / CF5610) (Burkholderia cepacia (strain J2315)).